Reading from the N-terminus, the 1375-residue chain is Ubiquitin carboxyl-terminal hydrolase 47 (1375 aa).

Lys122 carries the post-translational modification N6-acetyllysine. The USP domain occupies 188–564 (VGLVNQAMTC…NAYMLIYRLK (377 aa)). The Nucleophile role is filled by Cys197. Residues 425-452 (DEKSPQTESCTDSGAENEGSCHSDQMSN) form a disordered region. Residues 430-452 (QTESCTDSGAENEGSCHSDQMSN) are compositionally biased toward polar residues. The active-site Proton acceptor is the His503. Position 832 is a phosphoserine (Ser832). 3 disordered regions span residues 840–859 (TAYQ…CERV), 880–968 (LKSL…SHSS), and 983–1024 (NGLD…ESGK). Residues 882–899 (SLSLQQQQDGDNGDSSKS) show a composition bias toward low complexity. Position 910 is a phosphoserine (Ser910). Basic and acidic residues predominate over residues 912–928 (LNERDSSASVDNRELEQ). Positions 929–938 (HIQTSDPENF) are enriched in polar residues. Ser933 bears the Phosphoserine mark. Residues 940-950 (SEERSDSDVNN) are compositionally biased toward basic and acidic residues. Residues 953–968 (STSSVDSDILSSSHSS) show a composition bias toward low complexity. Positions 997-1006 (KANEGKKETW) are enriched in basic and acidic residues. Residues 1007 to 1020 (DTAEEDSGTDSEYD) are compositionally biased toward acidic residues. The residue at position 1013 (Ser1013) is a Phosphoserine. Thr1015 bears the Phosphothreonine mark. Ser1017 carries the phosphoserine modification.

It belongs to the peptidase C19 family. Interacts with BTRC and FBXW11. Interacts with POLB. Expressed in skeletal muscle, heart and testis.

The protein resides in the cytoplasm. The enzyme catalyses Thiol-dependent hydrolysis of ester, thioester, amide, peptide and isopeptide bonds formed by the C-terminal Gly of ubiquitin (a 76-residue protein attached to proteins as an intracellular targeting signal).. In terms of biological role, ubiquitin-specific protease that specifically deubiquitinates monoubiquitinated DNA polymerase beta (POLB), stabilizing POLB thereby playing a role in base-excision repair (BER). Acts as a regulator of cell growth and genome integrity. May also indirectly regulate CDC25A expression at a transcriptional level. This Homo sapiens (Human) protein is Ubiquitin carboxyl-terminal hydrolase 47 (USP47).